The chain runs to 503 residues: Ribose import ATP-binding protein RbsA 1 (503 aa).

ABC transporter domains follow at residues 5 to 241 (IALE…VGRA) and 253 to 495 (IGQP…AGIE). ATP is bound at residue 37–44 (GENGAGKS).

It belongs to the ABC transporter superfamily. Ribose importer (TC 3.A.1.2.1) family. As to quaternary structure, the complex is composed of an ATP-binding protein (RbsA), two transmembrane proteins (RbsC) and a solute-binding protein (RbsB).

The protein resides in the cell inner membrane. The enzyme catalyses D-ribose(out) + ATP + H2O = D-ribose(in) + ADP + phosphate + H(+). Functionally, part of the ABC transporter complex RbsABC involved in ribose import. Responsible for energy coupling to the transport system. The chain is Ribose import ATP-binding protein RbsA 1 from Rhizobium meliloti (strain 1021) (Ensifer meliloti).